The following is a 155-amino-acid chain: uncharacterized protein (155 aa).

The region spanning 7 to 154 (LQINYKTLEE…VWLPESVELQ (148 aa)) is the N-acetyltransferase domain.

This is an uncharacterized protein from Brevibacillus brevis (strain 47 / JCM 6285 / NBRC 100599).